The following is a 383-amino-acid chain: Dynein axonemal assembly factor 11 (383 aa).

4 LRR repeats span residues 20-45 (LSNL…ACRE), 46-66 (LEIL…QHLK), 67-89 (YLKY…GCEA), and 90-110 (LERL…ERLR). The LRRCT domain occupies 128–146 (VAGYRAYVVHALPQLRELD). Positions 201–244 (KGERLYGHTPEERLQMLREKEEEERRKREEQRERERSSQFGAIR) are disordered. A coiled-coil region spans residues 211-239 (EERLQMLREKEEEERRKREEQRERERSSQ).

This sequence belongs to the tilB family.

The protein localises to the cytoplasm. The protein resides in the cytoskeleton. It is found in the flagellum basal body. Its function is as follows. Involved in the regulation of the cell cycle; is required for the basal body replication and new flagellum biogenesis. The protein is Dynein axonemal assembly factor 11 (dnaaf11) of Trypanosoma brucei brucei.